The following is a 211-amino-acid chain: MADS-box protein AGL72 (211 aa).

The MADS-box domain maps to 1 to 61; the sequence is MVRGKIEIKK…GRLYEFASSD (61 aa). Residues 88-187 enclose the K-box domain; that stretch reads VQGLKKEMVT…LCQVGERPMG (100 aa).

It localises to the nucleus. MADS-box transcription factor that acts with AGL42 and AGL71 in the control of flowering time. Promotes flowering at the shoot apical and axillary meristems. Seems to act through a gibberellin-dependent pathway. Interacts genetically with SOC1 and its expression is directly regulated by SOC1. This is MADS-box protein AGL72 (AGL72) from Arabidopsis thaliana (Mouse-ear cress).